A 229-amino-acid chain; its full sequence is Potassium/proton antiporter CemA (229 aa).

A run of 3 helical transmembrane segments spans residues 7–27 (LTPF…SLSF), 106–126 (IVLH…YYFL), and 189–209 (IISG…KYWI).

Belongs to the CemA family.

Its subcellular location is the plastid. It is found in the chloroplast inner membrane. The catalysed reaction is K(+)(in) + H(+)(out) = K(+)(out) + H(+)(in). Contributes to K(+)/H(+) antiport activity by supporting proton efflux to control proton extrusion and homeostasis in chloroplasts in a light-dependent manner to modulate photosynthesis. Prevents excessive induction of non-photochemical quenching (NPQ) under continuous-light conditions. Indirectly promotes efficient inorganic carbon uptake into chloroplasts. The polypeptide is Potassium/proton antiporter CemA (Calycanthus floridus var. glaucus (Eastern sweetshrub)).